Here is a 198-residue protein sequence, read N- to C-terminus: Recombination protein RecR (198 aa).

The C4-type zinc finger occupies 57–72 (CEKCNTFTEAQICEVC). A Toprim domain is found at 80–175 (TLLCVVETPA…SVTRLARGVP (96 aa)).

It belongs to the RecR family.

Functionally, may play a role in DNA repair. It seems to be involved in an RecBC-independent recombinational process of DNA repair. It may act with RecF and RecO. In Paraburkholderia phymatum (strain DSM 17167 / CIP 108236 / LMG 21445 / STM815) (Burkholderia phymatum), this protein is Recombination protein RecR.